Consider the following 854-residue polypeptide: Envelope glycoprotein gp160 (854 aa).

Residues 1–20 form the signal peptide; sequence MGRLLIKILIIAIGISIGIG. Over 21–705 the chain is Extracellular; that stretch reads NLYVTVFYGI…IILGLRFAWV (685 aa). N-linked (GlcNAc...) asparagine; by host glycosylation occurs at Asn-35. An intrachain disulfide couples Cys-42 to Cys-55. N-linked (GlcNAc...) asparagine; by host glycosylation is found at Asn-68, Asn-115, Asn-136, Asn-153, Asn-168, Asn-182, and Asn-199. Disulfide bonds link Cys-99–Cys-207, Cys-106–Cys-198, Cys-111–Cys-154, Cys-220–Cys-250, and Cys-230–Cys-242. The interval 111–153 is V1; the sequence is CVELNGTATTKATTTATTTMTTPCQNCSTEQIEGEMAEEPASN. The segment at 154–198 is V2; that stretch reads CTFAIAGYQRDVKKNYSMTWYDQELVCNNKTGSEKGSKDCYMIHC. N-linked (GlcNAc...) asparagine; by host glycans are attached at residues Asn-244, Asn-255, Asn-265, Asn-271, Asn-283, Asn-295, Asn-305, Asn-355, Asn-400, Asn-409, Asn-458, Asn-472, and Asn-478. Residues 300–332 are V3; the sequence is CRRPGNKTVLPVTIMAGLVFHSQKYNTRLKQAW. Cys-300 and Cys-333 are oxidised to a cystine. 2 disulfides stabilise this stretch: Cys-382–Cys-457 and Cys-389–Cys-430. The interval 389–430 is V4; the sequence is CKMDWFINYLNNRTEDAEGTNRTCDKGKPGPGPCVQRTYVAC. The segment at 473-481 is V5; the sequence is KSGPINVTL. The fusion peptide stretch occupies residues 523–543; it reads VPFVLGFLGFLGAAGTAMGAA. Residues 586 to 602 form an immunosuppression region; it reads LNARVTALEKYLEDQAR. Residues Asn-630 and Asn-646 are each glycosylated (N-linked (GlcNAc...) asparagine; by host). Residues 633–672 are a coiled coil; that stretch reads WLEWERQINALEGNITQLLEEAQNQESKNLDLYQKLDDWS. Residues 667 to 688 form an MPER; binding to GalCer region; that stretch reads KLDDWSGFWSWFSLSTWLGYVK. Residues 706–726 traverse the membrane as a helical segment; it reads LWGCIRNIRQGYNPLPQIHIH. Positions 717-720 match the YXXL motif; contains endocytosis signal motif; sequence YNPL. Topologically, residues 727-854 are cytoplasmic; that stretch reads SSAERPDNGG…VRQGLEKVLG (128 aa).

The mature envelope protein (Env) consists of a homotrimer of non-covalently associated gp120-gp41 heterodimers. The resulting complex protrudes from the virus surface as a spike. Interacts with host CD4 and CCR5. Gp120 also interacts with the C-type lectins CD209/DC-SIGN and CLEC4M/DC-SIGNR (collectively referred to as DC-SIGN(R)). In terms of assembly, the mature envelope protein (Env) consists of a homotrimer of non-covalently associated gp120-gp41 heterodimers. The resulting complex protrudes from the virus surface as a spike. Post-translationally, specific enzymatic cleavages in vivo yield mature proteins. Envelope glycoproteins are synthesized as an inactive precursor that is heavily N-glycosylated and processed likely by host cell furin in the Golgi to yield the mature SU and TM proteins. The cleavage site between SU and TM requires the minimal sequence [KR]-X-[KR]-R.

The protein resides in the virion membrane. Its subcellular location is the host cell membrane. It is found in the host endosome membrane. Its function is as follows. The surface protein gp120 (SU) attaches the virus to the host lymphoid cell by binding to the primary receptor CD4. This interaction induces a structural rearrangement creating a high affinity binding site for a chemokine coreceptor like CCR5. This peculiar 2 stage receptor-interaction strategy allows gp120 to maintain the highly conserved coreceptor-binding site in a cryptic conformation, protected from neutralizing antibodies. These changes are transmitted to the transmembrane protein gp41 and are thought to activate its fusogenic potential by unmasking its fusion peptide. Functionally, surface protein gp120 (SU) may target the virus to gut-associated lymphoid tissue (GALT) by binding host ITGA4/ITGB7 (alpha-4/beta-7 integrins), a complex that mediates T-cell migration to the GALT. Interaction between gp120 and ITGA4/ITGB7 would allow the virus to enter GALT early in the infection, infecting and killing most of GALT's resting CD4+ T-cells. This T-cell depletion is believed to be the major insult to the host immune system leading to AIDS. In terms of biological role, the surface protein gp120 is a ligand for CD209/DC-SIGN and CLEC4M/DC-SIGNR, which are respectively found on dendritic cells (DCs), and on endothelial cells of liver sinusoids and lymph node sinuses. These interactions allow capture of viral particles at mucosal surfaces by these cells and subsequent transmission to permissive cells. DCs are professional antigen presenting cells, critical for host immunity by inducing specific immune responses against a broad variety of pathogens. They act as sentinels in various tissues where they take up antigen, process it, and present it to T-cells following migration to lymphoid organs. SIV subverts the migration properties of dendritic cells to gain access to CD4+ T-cells in lymph nodes. Virus transmission to permissive T-cells occurs either in trans (without DCs infection, through viral capture and transmission), or in cis (following DCs productive infection, through the usual CD4-gp120 interaction), thereby inducing a robust infection. In trans infection, bound virions remain infectious over days and it is proposed that they are not degraded, but protected in non-lysosomal acidic organelles within the DCs close to the cell membrane thus contributing to the viral infectious potential during DCs' migration from the periphery to the lymphoid tissues. On arrival at lymphoid tissues, intact virions recycle back to DCs' cell surface allowing virus transmission to CD4+ T-cells. Virion capture also seems to lead to MHC-II-restricted viral antigen presentation, and probably to the activation of SIV-specific CD4+ cells. The transmembrane protein gp41 (TM) acts as a class I viral fusion protein. Under the current model, the protein has at least 3 conformational states: pre-fusion native state, pre-hairpin intermediate state, and post-fusion hairpin state. During fusion of viral and target intracellular membranes, the coiled coil regions (heptad repeats) assume a trimer-of-hairpins structure, positioning the fusion peptide in close proximity to the C-terminal region of the ectodomain. The formation of this structure appears to drive apposition and subsequent fusion of viral and target cell membranes. Complete fusion occurs in host cell endosomes. The virus undergoes clathrin-dependent internalization long before endosomal fusion, thus minimizing the surface exposure of conserved viral epitopes during fusion and reducing the efficacy of inhibitors targeting these epitopes. Membranes fusion leads to delivery of the nucleocapsid into the cytoplasm. Its function is as follows. The envelope glycoprotein gp160 precursor down-modulates cell surface CD4 antigen by interacting with it in the endoplasmic reticulum and blocking its transport to the cell surface. Functionally, the gp120-gp41 heterodimer allows rapid transcytosis of the virus through CD4 negative cells such as simple epithelial monolayers of the intestinal, rectal and endocervical epithelial barriers. Both gp120 and gp41 specifically recognize glycosphingolipids galactosyl-ceramide (GalCer) or 3' sulfo-galactosyl-ceramide (GalS) present in the lipid rafts structures of epithelial cells. Binding to these alternative receptors allows the rapid transcytosis of the virus through the epithelial cells. This transcytotic vesicle-mediated transport of virions from the apical side to the basolateral side of the epithelial cells does not involve infection of the cells themselves. This Cercopithecidae (Old World monkeys) protein is Envelope glycoprotein gp160 (env).